Reading from the N-terminus, the 162-residue chain is Caveolin-2 (162 aa).

Topologically, residues 1–86 are cytoplasmic; the sequence is MGLETEKADV…FEISKYVIYK (86 aa). A Phosphotyrosine; by SRC modification is found at Tyr-19. 2 positions are modified to phosphoserine: Ser-20 and Ser-23. Tyr-27 carries the post-translational modification Phosphotyrosine; by SRC. Ser-36 is modified (phosphoserine). An intramembrane region (helical) is located at residues 87–107; sequence FLTVFLAIPLAFAAGIIFATL. Residues 108–162 lie on the Cytoplasmic side of the membrane; that stretch reads SCLHIWIIMPFVKTCLMVLPSVQTIWRSVTDAVIAPLCTSVGRVFSSVSLQLSRD.

This sequence belongs to the caveolin family. Monomer or homodimer. Interacts with CAV1; the interaction forms a stable heterooligomeric complex that is required for targeting to lipid rafts and for caveolae formation. Tyrosine phosphorylated forms do not form heterooligomers with the Tyr-19-phosphorylated form existing as a monomer or dimer, and the Tyr-27-form as a monomer only. Interacts (tyrosine phosphorylated form) with the SH2 domain-containing proteins, RASA1, NCK1 and SRC. Interacts (tyrosine phosphorylated form) with INSR, the interaction (Tyr-27-phosphorylated form) is increased on insulin stimulation. Interacts (Tyr-19 phosphorylated form) with MAPK1 (phosphorylated form); the interaction, promoted by insulin, leads to nuclear location and MAPK1 activation. Interacts with STAT3; the interaction is increased on insulin-induced tyrosine phosphorylation leading to STAT activation. Post-translationally, phosphorylated on serine and tyrosine residues. CAV1 promotes phosphorylation on Ser-23 which then targets the complex to the plasma membrane, lipid rafts and caveolae. Phosphorylation on Ser-36 appears to modulate mitosis in endothelial cells. Phosphorylation on both Tyr-19 and Tyr-27 is required for insulin-induced 'Ser-727' phosphorylation of STAT3 and its activation. Phosphorylation on Tyr-19 is required for insulin-induced phosphorylation of MAPK1 and DNA binding of STAT3. Tyrosine phosphorylation is induced by both EGF and insulin (By. similarity).

The protein resides in the nucleus. Its subcellular location is the cytoplasm. It is found in the golgi apparatus membrane. The protein localises to the cell membrane. It localises to the membrane. The protein resides in the caveola. May act as a scaffolding protein within caveolar membranes. Interacts directly with G-protein alpha subunits and can functionally regulate their activity. Acts as an accessory protein in conjunction with CAV1 in targeting to lipid rafts and driving caveolae formation. The Ser-36 phosphorylated form has a role in modulating mitosis in endothelial cells. Positive regulator of cellular mitogenesis of the MAPK signaling pathway. Required for the insulin-stimulated nuclear translocation and activation of MAPK1 and STAT3, and the subsequent regulation of cell cycle progression. This is Caveolin-2 (CAV2) from Carollia perspicillata (Seba's short-tailed bat).